A 491-amino-acid polypeptide reads, in one-letter code: Phosphoethanolamine N-methyltransferase 1 (491 aa).

Ala2 bears the N-acetylalanine mark. Residues Gly61, Arg66, Asp82, Asp107, Val108, and Asn126 each contribute to the S-adenosyl-L-homocysteine site. Phosphocholine contacts are provided by Ser159, Ser164, Gly165, Arg169, and Tyr176. N-methylethanolamine phosphate-binding positions include 245 to 246 and Tyr254; that span reads QY. Residue Tyr254 coordinates phosphocholine. S-adenosyl-L-homocysteine-binding residues include Val263, Ser264, Gly290, Asp312, Asp338, Cys339, and Arg355. The phosphocholine site is built by Tyr386, Tyr400, Arg404, Tyr406, and Lys472. Residues Tyr386, Tyr400, 404 to 406, and Lys472 contribute to the N-methylethanolamine phosphate site; that span reads RGY.

Belongs to the class I-like SAM-binding methyltransferase superfamily. PEAMT family. As to expression, highly expressed in the meristem and elongation zones of the root. Expressed in differentiated root epidermal cells. Highly expressed in leaf vasculature.

Its subcellular location is the cytoplasm. It catalyses the reaction phosphoethanolamine + S-adenosyl-L-methionine = N-methylethanolamine phosphate + S-adenosyl-L-homocysteine + H(+). It carries out the reaction N-methylethanolamine phosphate + S-adenosyl-L-methionine = N,N-dimethylethanolamine phosphate + S-adenosyl-L-homocysteine + H(+). The enzyme catalyses N,N-dimethylethanolamine phosphate + S-adenosyl-L-methionine = phosphocholine + S-adenosyl-L-homocysteine + H(+). The protein operates within phospholipid metabolism; phosphatidylcholine biosynthesis; phosphocholine from phosphoethanolamine: step 1/1. In terms of biological role, involved in phosphocholine biosynthesis. Catalyzes the N-methylation of phosphoethanolamine, phosphomonomethylethanolamine and phosphodimethylethanolamine, the three methylation steps required to convert phosphoethanolamine to phosphocholine (PC). Required for root system development and epidermal cell integrity through its role in choline and phospholipid metabolism. In association with NMT3, regulates PC homeostasis, phase transition at the shoot apex, coordinated organ development, and fertility. In association with NMT3, involved in phosphatidylcholine biosynthesis and vascular development. In association with NMT2, involved in the production of phosphatidylcholine in roots, essential for root development. In association with NMT2 produce phosphocholine mainly for leaf growth maintenance. Contributes to the regulation of overall root zonation dynamics through reactive oxygen species (ROS) and auxin-regulated cell differentiation. Participates in root development of primary root elongation under salt stress conditions by balancing reactive oxygen species (ROS) production and distribution through abscisic acid (ABA) signaling. This chain is Phosphoethanolamine N-methyltransferase 1, found in Arabidopsis thaliana (Mouse-ear cress).